We begin with the raw amino-acid sequence, 387 residues long: Alpha-maltose-1-phosphate synthase (387 aa).

Belongs to the glycosyltransferase group 1 family.

The catalysed reaction is ADP-alpha-D-glucose + alpha-D-glucose 1-phosphate = alpha-maltose 1-phosphate + ADP + H(+). Its pathway is capsule biogenesis; capsule polysaccharide biosynthesis. It participates in glycan biosynthesis; glycogen biosynthesis. Involved in the biosynthesis of the maltose-1-phosphate (M1P) building block required for alpha-glucan production by the key enzyme GlgE. Catalyzes the formation of an alpha-1,4 linkage between glucose from ADP-glucose and glucose 1-phosphate (G1P) to yield maltose-1-phosphate (M1P). This is Alpha-maltose-1-phosphate synthase from Mycobacterium tuberculosis (strain CDC 1551 / Oshkosh).